Here is a 110-residue protein sequence, read N- to C-terminus: Late cornified envelope-like proline-rich protein 1 (110 aa).

The tract at residues 1-24 is disordered; sequence MSSDDKNKPGEPKNEPKQCDPGCE.

The protein belongs to the cornifin (SPRR) family.

This chain is Late cornified envelope-like proline-rich protein 1 (LELP1), found in Bos taurus (Bovine).